Here is a 761-residue protein sequence, read N- to C-terminus: MITTHNLGFPRIGAKRELKFAQEDYWKGRISQEELLNVGAELRQRHWRNQSQLDLTPVGDFSFYDQVLDMSFTLGVIPERVSRLQGGELDNYFRVARGRSAQDSDCHCVHAGEMTKWFDTNYHYIVPEFTADTAFSLNPSRLLAEIAEAKQTGATIKPVIIGPVTYLWLGKSKDSSNKLDLLERLLPVYAALLDVLANQGVEWVQIDEPILVTELDAEWKYALNLAYHTLKSSKAKLLLATYFGQLQDNLQLACELPVGGLHVDAINGRAEIGKLIDWLPSHKVLSLGVVNGRNIWKTDLNQTLDWLQPVYDKLQSRLWLAPSCSLLHSPVDLDSEEKMDAEIKSWLAFALQKLDEVKILATALSEGRNTVADALKENQDCVSSRKHSPRVHNPAVKEAVEAITAEMGDRRSDYQTRAARQAQRLQLPAFPTTTIGSFPQTADIRNARRRYRQGELQDNEYRTLMQQEIERCVREQENLGLDVLVHGEAERNDMVEYFGEQLDGYVFSQFGWVQSYGSRCVKPPIIFGDISRPQAMTVEWIKYAQSLTDRPMKGMLTGPVTILNWSFVRDDQPRALTCYQLALAIRAEVQDLERAGVRIIQIDEAALREGLPLRRAQWREYLQWAVSSFRIAANGVADETQIHTHMCYSEFNDIIEAIAGMDADVITIETSRSDMELLDAFDNFKYPNEIGPGVYDIHSPNIPSETHIVQLMRKAAERIPAHRLWVNPDCGLKTRNWEEVRPALQNMVNAAKQLRADVVAA.

Residues 16–19 and Lys-116 contribute to the 5-methyltetrahydropteroyltri-L-glutamate site; that span reads RELK. Residues 435–437 and Glu-488 contribute to the L-homocysteine site; that span reads IGS. L-methionine contacts are provided by residues 435-437 and Glu-488; that span reads IGS. 5-methyltetrahydropteroyltri-L-glutamate contacts are provided by residues 519-520 and Trp-565; that span reads RC. Asp-603 provides a ligand contact to L-homocysteine. Asp-603 contributes to the L-methionine binding site. Residue Glu-609 participates in 5-methyltetrahydropteroyltri-L-glutamate binding. Residues His-645, Cys-647, and Glu-669 each coordinate Zn(2+). The Proton donor role is filled by His-698. Cys-730 provides a ligand contact to Zn(2+).

It belongs to the vitamin-B12 independent methionine synthase family. Zn(2+) is required as a cofactor.

It carries out the reaction 5-methyltetrahydropteroyltri-L-glutamate + L-homocysteine = tetrahydropteroyltri-L-glutamate + L-methionine. It participates in amino-acid biosynthesis; L-methionine biosynthesis via de novo pathway; L-methionine from L-homocysteine (MetE route): step 1/1. Its function is as follows. Catalyzes the transfer of a methyl group from 5-methyltetrahydrofolate to homocysteine resulting in methionine formation. The polypeptide is 5-methyltetrahydropteroyltriglutamate--homocysteine methyltransferase (Hahella chejuensis (strain KCTC 2396)).